Reading from the N-terminus, the 292-residue chain is ATP synthase gamma chain (292 aa).

Belongs to the ATPase gamma chain family. In terms of assembly, F-type ATPases have 2 components, CF(1) - the catalytic core - and CF(0) - the membrane proton channel. CF(1) has five subunits: alpha(3), beta(3), gamma(1), delta(1), epsilon(1). CF(0) has three main subunits: a, b and c.

Its subcellular location is the cell inner membrane. Its function is as follows. Produces ATP from ADP in the presence of a proton gradient across the membrane. The gamma chain is believed to be important in regulating ATPase activity and the flow of protons through the CF(0) complex. The chain is ATP synthase gamma chain from Brucella abortus (strain S19).